A 618-amino-acid polypeptide reads, in one-letter code: 1-deoxy-D-xylulose-5-phosphate synthase (618 aa).

Thiamine diphosphate contacts are provided by residues His-70 and 111–113 (GHS). Asp-142 lines the Mg(2+) pocket. Thiamine diphosphate is bound by residues 143 to 144 (GS), Asn-171, Tyr-278, and Glu-360. Asn-171 serves as a coordination point for Mg(2+).

This sequence belongs to the transketolase family. DXPS subfamily. As to quaternary structure, homodimer. Mg(2+) serves as cofactor. It depends on thiamine diphosphate as a cofactor.

The enzyme catalyses D-glyceraldehyde 3-phosphate + pyruvate + H(+) = 1-deoxy-D-xylulose 5-phosphate + CO2. It participates in metabolic intermediate biosynthesis; 1-deoxy-D-xylulose 5-phosphate biosynthesis; 1-deoxy-D-xylulose 5-phosphate from D-glyceraldehyde 3-phosphate and pyruvate: step 1/1. In terms of biological role, catalyzes the acyloin condensation reaction between C atoms 2 and 3 of pyruvate and glyceraldehyde 3-phosphate to yield 1-deoxy-D-xylulose-5-phosphate (DXP). This Helicobacter pylori (strain G27) protein is 1-deoxy-D-xylulose-5-phosphate synthase.